Reading from the N-terminus, the 112-residue chain is MTEVKLDFDKQGGLVPVIVTDYKTGQVLMLAYMNEVSYQLTLETKQMHYWSRSRNELWHKGATSGHFQHVKSIKTDCDWDTLLIAVEQEGAACHTGAYSCFFTDIYDDNQDR.

Asp76 contacts Mg(2+). Cys77 contacts Zn(2+). Positions 78 and 80 each coordinate Mg(2+). Cys93 and Cys100 together coordinate Zn(2+).

The protein belongs to the PRA-CH family. Homodimer. Requires Mg(2+) as cofactor. The cofactor is Zn(2+).

It localises to the cytoplasm. The catalysed reaction is 1-(5-phospho-beta-D-ribosyl)-5'-AMP + H2O = 1-(5-phospho-beta-D-ribosyl)-5-[(5-phospho-beta-D-ribosylamino)methylideneamino]imidazole-4-carboxamide. It functions in the pathway amino-acid biosynthesis; L-histidine biosynthesis; L-histidine from 5-phospho-alpha-D-ribose 1-diphosphate: step 3/9. Functionally, catalyzes the hydrolysis of the adenine ring of phosphoribosyl-AMP. This chain is Phosphoribosyl-AMP cyclohydrolase, found in Streptococcus thermophilus (strain ATCC BAA-491 / LMD-9).